The sequence spans 235 residues: Protein YIP4 (235 aa).

Transmembrane regions (helical) follow at residues 89–109 (ISAN…SLFV), 114–134 (SLFS…ALHL), 145–165 (LISY…NALV), 186–206 (VLSL…VAAV), and 215–235 (IIEI…STIL).

It belongs to the YIP1 family. Interacts with TVP18, TVP23, YIP1 and YIP5. Interacts with SEC4, YPT1, YPT6, YPT7, YPT10, YPT11, YPT31, YPT32 and YPT52; These proteins are all Rab GTPases.

The protein localises to the golgi apparatus membrane. In terms of biological role, may be involved in proper membrane localization of Rab GTPases. This is Protein YIP4 (YIP4) from Saccharomyces cerevisiae (strain ATCC 204508 / S288c) (Baker's yeast).